A 77-amino-acid polypeptide reads, in one-letter code: Translational regulator CsrA (77 aa).

The protein belongs to the CsrA/RsmA family. Homodimer; the beta-strands of each monomer intercalate to form a hydrophobic core, while the alpha-helices form wings that extend away from the core.

Its subcellular location is the cytoplasm. Its function is as follows. A translational regulator that binds mRNA to regulate translation initiation and/or mRNA stability. Usually binds in the 5'-UTR at or near the Shine-Dalgarno sequence preventing ribosome-binding, thus repressing translation. Its main target seems to be the major flagellin gene, while its function is anatagonized by FliW. In Desulfitobacterium hafniense (strain Y51), this protein is Translational regulator CsrA.